A 313-amino-acid chain; its full sequence is Bifunctional pinoresinol-lariciresinol reductase 1 (313 aa).

Residues 11–17, arginine 36, and lysine 45 each bind NADP(+); that span reads GGTGYIG. Lysine 138 acts as the Proton acceptor in catalysis. Arginine 142 contacts NADP(+). Histidine 271 lines the substrate pocket.

This sequence belongs to the NmrA-type oxidoreductase family. Isoflavone reductase subfamily. In terms of assembly, dimer.

It carries out the reaction (+)-lariciresinol + NADP(+) = (+)-pinoresinol + NADPH + H(+). The catalysed reaction is (-)-lariciresinol + NADP(+) = (-)-pinoresinol + NADPH + H(+). It catalyses the reaction (+)-secoisolariciresinol + NADP(+) = (-)-lariciresinol + NADPH + H(+). Its function is as follows. Reductase involved in lignan biosynthesis. Catalyzes the enantioselective sequential conversion of (-)-pinoresinol into (-)-lariciresinol and of (-)-lariciresinol into (+)-secoisolariciresinol. Can also convert with a lower efficiency (+)-pinoresinol into (+)-lariciresinol, but not (+)-lariciresinol into (-)-secoisolariciresinol. Abstracts the 4R-hydride from the NADPH cofactor during catalysis. The chain is Bifunctional pinoresinol-lariciresinol reductase 1 (PLR_Tp1) from Thuja plicata (Western red-cedar).